The sequence spans 205 residues: Probable GTP-binding protein EngB (205 aa).

Residues 27 to 201 enclose the EngB-type G domain; that stretch reads TGIEIAFAGR…AAKLDFWFSP (175 aa). GTP contacts are provided by residues 35-42, 62-66, 80-83, 147-150, and 180-182; these read GRSNAGKS, GRTQL, DLPG, TKAD, and FSA. S42 and T64 together coordinate Mg(2+).

Belongs to the TRAFAC class TrmE-Era-EngA-EngB-Septin-like GTPase superfamily. EngB GTPase family. Mg(2+) serves as cofactor.

In terms of biological role, necessary for normal cell division and for the maintenance of normal septation. This Haemophilus influenzae (strain PittEE) protein is Probable GTP-binding protein EngB.